Reading from the N-terminus, the 49-residue chain is uncharacterized protein (49 aa).

Residues 22–42 (AIVGISIMIIIAIGIYLIIEY) traverse the membrane as a helical segment.

Its subcellular location is the membrane. This is an uncharacterized protein from Methanocaldococcus jannaschii (strain ATCC 43067 / DSM 2661 / JAL-1 / JCM 10045 / NBRC 100440) (Methanococcus jannaschii).